Consider the following 139-residue polypeptide: Holo-[acyl-carrier-protein] synthase (139 aa).

Mg(2+) contacts are provided by Asp8 and Glu61.

The protein belongs to the P-Pant transferase superfamily. AcpS family. Requires Mg(2+) as cofactor.

It localises to the cytoplasm. It carries out the reaction apo-[ACP] + CoA = holo-[ACP] + adenosine 3',5'-bisphosphate + H(+). Transfers the 4'-phosphopantetheine moiety from coenzyme A to a Ser of acyl-carrier-protein. This is Holo-[acyl-carrier-protein] synthase from Nitrobacter hamburgensis (strain DSM 10229 / NCIMB 13809 / X14).